The chain runs to 234 residues: Large ribosomal subunit protein uL1 (234 aa).

Belongs to the universal ribosomal protein uL1 family. As to quaternary structure, part of the 50S ribosomal subunit.

Functionally, binds directly to 23S rRNA. The L1 stalk is quite mobile in the ribosome, and is involved in E site tRNA release. In terms of biological role, protein L1 is also a translational repressor protein, it controls the translation of the L11 operon by binding to its mRNA. This is Large ribosomal subunit protein uL1 from Serratia marcescens.